Here is a 529-residue protein sequence, read N- to C-terminus: uncharacterized protein (529 aa).

The N-terminal stretch at 1–20 (MYFLILILVLLLIMVAAATA) is a signal peptide.

This is an uncharacterized protein from Orgyia pseudotsugata multicapsid polyhedrosis virus (OpMNPV).